Consider the following 61-residue polypeptide: Translational regulator CsrA (61 aa).

This sequence belongs to the CsrA/RsmA family. Homodimer; the beta-strands of each monomer intercalate to form a hydrophobic core, while the alpha-helices form wings that extend away from the core.

The protein resides in the cytoplasm. A key translational regulator that binds mRNA to regulate translation initiation and/or mRNA stability. Mediates global changes in gene expression, shifting from rapid growth to stress survival by linking envelope stress, the stringent response and the catabolite repression systems. Usually binds in the 5'-UTR; binding at or near the Shine-Dalgarno sequence prevents ribosome-binding, repressing translation, binding elsewhere in the 5'-UTR can activate translation and/or stabilize the mRNA. Its function is antagonized by small RNA(s). This Mannheimia succiniciproducens (strain KCTC 0769BP / MBEL55E) protein is Translational regulator CsrA.